The sequence spans 336 residues: Eukaryotic translation initiation factor 3 subunit I (336 aa).

WD repeat units lie at residues 8–49 (GHER…GTYN), 50–91 (GHNG…KAWE), 93–135 (PTAI…GPQP), 144–183 (PIGSKAQVVAFSSLDKHLITGHENGKVALWDVNTGEEVAS), 187–226 (NHIGLITDLQMSADRTYFVTSSKDKSARLYDSRTLEVIKS), and 285–324 (GGFGPCNSIAVHPEGKGYAIGGEDGYVRLHHFDENTFRAK).

It belongs to the eIF-3 subunit I family. Component of the eukaryotic translation initiation factor 3 (eIF-3) complex.

It localises to the cytoplasm. In terms of biological role, component of the eukaryotic translation initiation factor 3 (eIF-3) complex, which is involved in protein synthesis of a specialized repertoire of mRNAs and, together with other initiation factors, stimulates binding of mRNA and methionyl-tRNAi to the 40S ribosome. The eIF-3 complex specifically targets and initiates translation of a subset of mRNAs involved in cell proliferation. The protein is Eukaryotic translation initiation factor 3 subunit I of Puccinia graminis f. sp. tritici (strain CRL 75-36-700-3 / race SCCL) (Black stem rust fungus).